We begin with the raw amino-acid sequence, 347 residues long: Quinolinate synthase (347 aa).

His-47 and Ser-68 together coordinate iminosuccinate. [4Fe-4S] cluster is bound at residue Cys-113. Iminosuccinate contacts are provided by residues 139–141 and Ser-156; that span reads YAN. Cys-200 is a [4Fe-4S] cluster binding site. Residues 226–228 and Thr-243 contribute to the iminosuccinate site; that span reads HPE. Cys-297 provides a ligand contact to [4Fe-4S] cluster.

Belongs to the quinolinate synthase family. Type 1 subfamily. Requires [4Fe-4S] cluster as cofactor.

It is found in the cytoplasm. The enzyme catalyses iminosuccinate + dihydroxyacetone phosphate = quinolinate + phosphate + 2 H2O + H(+). Its pathway is cofactor biosynthesis; NAD(+) biosynthesis; quinolinate from iminoaspartate: step 1/1. Functionally, catalyzes the condensation of iminoaspartate with dihydroxyacetone phosphate to form quinolinate. This Salmonella paratyphi A (strain ATCC 9150 / SARB42) protein is Quinolinate synthase.